Consider the following 116-residue polypeptide: Large ribosomal subunit protein bL17 (116 aa).

It belongs to the bacterial ribosomal protein bL17 family. Part of the 50S ribosomal subunit. Contacts protein L32.

In Synechococcus elongatus (strain ATCC 33912 / PCC 7942 / FACHB-805) (Anacystis nidulans R2), this protein is Large ribosomal subunit protein bL17.